The following is a 99-amino-acid chain: CLAVATA3/ESR (CLE)-related protein 41 (99 aa).

The first 34 residues, 1-34, serve as a signal peptide directing secretion; that stretch reads MATSNDQTNTKSSHSRTLLLLFIFLSLLLFSSLT. Residues 60–99 are disordered; the sequence is ASSTMDLRPKASTRRSRTSRRREFGNDAHEVPSGPNPISN. A compositionally biased stretch (basic residues) spans 70-79; the sequence is ASTRRSRTSR. A compositionally biased stretch (basic and acidic residues) spans 80-89; the sequence is RREFGNDAHE. Residues proline 91 and proline 94 each carry the hydroxyproline modification. An O-linked (Ara...) hydroxyproline glycan is attached at proline 94.

It belongs to the CLV3/ESR signal peptide family. CLE41p interacts specifically with the leucine-rich repeat receptor-like protein kinase TDR. The O-glycosylation (arabinosylation) of the hydroxyproline Pro-94 enhances binding affinity of the CLE41p peptide for its receptor. Mostly expressed in inflorescence and roots, and, to a lower extent, in seedlings, flowers, leaves and siliques. Observed along the vascular strands in cotyledons, leaves and roots, but not in shoot apical meristems (SAM). Restricted to the phloem and the neighboring pericycle cells in the roots and hypocotyls.

Its subcellular location is the secreted. The protein resides in the extracellular space. Functionally, extracellular signal peptide that regulates cell fate. May act with TDR as a ligand-receptor pair in a signal transduction pathway that represses tracheary element differentiation but promotes the formation of procambial cells adjacent to phloem cells in the veins in an auxin-dependent manner. Regulates the transition of protophloem cells from proliferation to differentiation, thus impinging on postembryonic growth capacity of the root meristem; this signaling pathway requires CRN and CLV2. This chain is CLAVATA3/ESR (CLE)-related protein 41, found in Arabidopsis thaliana (Mouse-ear cress).